The chain runs to 301 residues: Heterogeneous nuclear ribonucleoprotein D-like (301 aa).

The disordered stretch occupies residues 1–29 (MEDATEMSGGAEEFAEGSKINASKNQQDD). 2 consecutive RRM domains span residues 30–112 (GKMF…KGKE) and 115–194 (KKVF…QPKE). Disordered regions lie at residues 194–230 (EVYR…NWNQ) and 269–301 (GYGP…YQPY). Over residues 212–224 (GGRGGGRGRGRGQ) the composition is skewed to gly residues.

The protein resides in the nucleus. The protein localises to the cytoplasm. Its function is as follows. Acts as a transcriptional regulator. Binds DNA and RNA. The chain is Heterogeneous nuclear ribonucleoprotein D-like (HNRNPDL) from Gallus gallus (Chicken).